Consider the following 474-residue polypeptide: Sugar transporter ERD6-like 17 (474 aa).

12 helical membrane passes run 27–47, 76–96, 106–126, 129–149, 159–180, 184–204, 266–286, 302–322, 329–349, 363–383, 403–423, and 429–449; these read ITAC…SFGV, FATL…MVIG, FLCI…LLNF, IISG…IAEI, TFSN…GNFI, TLAL…FFVP, TLVV…AAVI, IGTT…LILV, PLLM…GVAF, ILSF…LGGL, IVTL…NFLF, and GTFF…WLLV.

This sequence belongs to the major facilitator superfamily. Sugar transporter (TC 2.A.1.1) family. In terms of tissue distribution, expressed in young seedlings.

The protein localises to the membrane. Its function is as follows. Sugar transporter. The protein is Sugar transporter ERD6-like 17 of Arabidopsis thaliana (Mouse-ear cress).